A 600-amino-acid chain; its full sequence is MKTHYFKKIFNLKFLVIFFSILFCILLILDLTFERRIKGIKKRTDEIIKKIKDDNHLVEEIVFYETNSTIFEKSFYRVEILVKNKNNLTTKEKWYAVVDSIFFHEIHSLIKGRENIQIKDPKTDFHLSELILSLVPIVSSTIFMFYIISNIKKSSGKLNSNAKVSAKQKSLFTFKDVAGNTEEKEEMTELIDFLKQPQKYETIGAAIPKGVLLEGPPGTGKTLLAKALAGEASVPFYAVSGSEFVEMYVGVGASRVRTLFKEAKLNAPCVLFIDEIDVLGGKRGGNSSGGNQEKDQTLNQLLTEMDGFTQAKGIIVIGATNRADMLDAALLRPGRFDRKILVNLPDIKSRAEILKLHAQNKKLSSDIDFHQLAQQTPGMSGAQLAAVLNEASILTVRNHKDFITMTELSEALDRVLMGPAKKSIKYDPEERRMVAYHEAGHAVIGIKLKHAQKVQKITIIPRGNAGGYNLMMPEKETFFSSRKRMLAQIQSFLGGRVAEELVFDDISSGAFDDFRQATKIARLMVTKYGMSDLGVSQDSEFSDKKLIDTAIKKIIDNCYARTKHLMLENKTLLDQIAHLLLEQETITQAEIEQLVVNTKK.

At 1–8 (MKTHYFKK) the chain is on the cytoplasmic side. Residues 9–29 (IFNLKFLVIFFSILFCILLIL) traverse the membrane as a helical segment. Over 30-130 (DLTFERRIKG…PKTDFHLSEL (101 aa)) the chain is Extracellular. A helical membrane pass occupies residues 131 to 151 (ILSLVPIVSSTIFMFYIISNI). Residues 152–600 (KKSSGKLNSN…IEQLVVNTKK (449 aa)) are Cytoplasmic-facing. Position 215–222 (215–222 (GPPGTGKT)) interacts with ATP. His-437 contributes to the Zn(2+) binding site. Glu-438 is an active-site residue. 2 residues coordinate Zn(2+): His-441 and Asp-513.

In the central section; belongs to the AAA ATPase family. The protein in the C-terminal section; belongs to the peptidase M41 family. As to quaternary structure, homohexamer. Requires Zn(2+) as cofactor.

The protein localises to the cell membrane. In terms of biological role, acts as a processive, ATP-dependent zinc metallopeptidase for both cytoplasmic and membrane proteins. Plays a role in the quality control of integral membrane proteins. The protein is ATP-dependent zinc metalloprotease FtsH 1 of Phytoplasma mali (strain AT).